The primary structure comprises 312 residues: Apolipoprotein E (312 aa).

Positions 1–18 (MKALWALLLVPLLTGCLA) are cleaved as a signal peptide. A run of 8 repeats spans residues 72–93 (VLME…EQLG), 94–115 (PVAE…ARLG), 116–137 (ADME…TMLG), 138–159 (QSTE…KRLM), 160–181 (RDAD…EGAE), 182–203 (RGVS…QRTA), 204–225 (NLGA…DRIR), and 226–247 (GRLE…EQME). Residues 72-247 (VLMEDTMTEV…RLEEVREQME (176 aa)) are 8 X 22 AA approximate tandem repeats. M135 is subject to Methionine sulfoxide. At S139 the chain carries Phosphoserine. The segment at 150–160 (HLRKMRKRLMR) is LDL and other lipoprotein receptors binding. The LDL receptor binding stretch occupies residues 150 to 160 (HLRKMRKRLMR). 154-157 (MRKR) contributes to the heparin binding site. The interval 202–282 (TANLGAGAAQ…GWFEPLVEDM (81 aa)) is lipid-binding and lipoprotein association. Residue 221 to 228 (SDRIRGRL) participates in heparin binding. The segment at 258-312 (QQIRLQAEIFQARIKGWFEPLVEDMQRQWANLMEKIQASVATNSIASTTVPLENQ) is homooligomerization. Residues 270-282 (RIKGWFEPLVEDM) form a specificity for association with VLDL region.

It belongs to the apolipoprotein A1/A4/E family. In terms of assembly, homotetramer. May interact with ABCA1; functionally associated with ABCA1 in the biogenesis of HDLs. May interact with APP/A4 amyloid-beta peptide; the interaction is extremely stable in vitro but its physiological significance is unclear. May interact with MAPT. May interact with MAP2. In the cerebrospinal fluid, interacts with secreted SORL1. Interacts with PMEL; this allows the loading of PMEL luminal fragment on ILVs to induce fibril nucleation. In terms of processing, APOE exists as multiple glycosylated and sialylated glycoforms within cells and in plasma. The extent of glycosylation and sialylation are tissue and context specific. Post-translationally, glycated in plasma VLDL. Phosphorylated by FAM20C in the extracellular medium.

It is found in the secreted. The protein localises to the extracellular space. The protein resides in the extracellular matrix. It localises to the extracellular vesicle. Its subcellular location is the endosome. It is found in the multivesicular body. Functionally, APOE is an apolipoprotein, a protein associating with lipid particles, that mainly functions in lipoprotein-mediated lipid transport between organs via the plasma and interstitial fluids. APOE is a core component of plasma lipoproteins and is involved in their production, conversion and clearance. Apolipoproteins are amphipathic molecules that interact both with lipids of the lipoprotein particle core and the aqueous environment of the plasma. As such, APOE associates with chylomicrons, chylomicron remnants, very low density lipoproteins (VLDL) and intermediate density lipoproteins (IDL) but shows a preferential binding to high-density lipoproteins (HDL). It also binds a wide range of cellular receptors including the LDL receptor/LDLR and the very low-density lipoprotein receptor/VLDLR that mediate the cellular uptake of the APOE-containing lipoprotein particles. Finally, APOE also has a heparin-binding activity and binds heparan-sulfate proteoglycans on the surface of cells, a property that supports the capture and the receptor-mediated uptake of APOE-containing lipoproteins by cells. This Rattus norvegicus (Rat) protein is Apolipoprotein E (Apoe).